A 458-amino-acid chain; its full sequence is Retinoic acid receptor gamma (458 aa).

A modulating region spans residues 1 to 89 (MATNKERLFA…PPPPPRVYKP (89 aa)). Arg-34 is modified (omega-N-methylarginine). The tract at residues 58–83 (MASLSVETQSTSSEEMVPSSPSPPPP) is disordered. Residues 62–71 (SVETQSTSSE) are compositionally biased toward polar residues. 2 consecutive NR C4-type zinc fingers follow at residues 90–110 (CFVCNDKSSGYHYGVSSCEGC) and 126–150 (CHRDKNCIINKVTRNRCQYCRLQKC). Residues 90 to 155 (CFVCNDKSSG…RLQKCFEVGM (66 aa)) constitute a DNA-binding region (nuclear receptor). The tract at residues 156-184 (SKEAVRNDRNKKKKEVKEEGSPDSYELSP) is hinge. The segment at 161 to 180 (RNDRNKKKKEVKEEGSPDSY) is disordered. Glycyl lysine isopeptide (Lys-Gly) (interchain with G-Cter in SUMO2) cross-links involve residues Lys-172 and Lys-401. The 235-residue stretch at 185–419 (QLEELITKVS…PLIREMLENP (235 aa)) folds into the NR LBD domain. The disordered stretch occupies residues 409 to 458 (PPLIREMLENPEMFEDDSSKPGPHPKASSEDEAPGGQGKRGQSPQPDQGP). A compositionally biased stretch (polar residues) spans 448–458 (RGQSPQPDQGP).

Belongs to the nuclear hormone receptor family. NR1 subfamily. In terms of assembly, homodimer. Heterodimer with a RXR molecule. Binds DNA preferentially as a RAR/RXR heterodimer. Forms a complex with PUS1 and the SRA1 RNA in the nucleus.

It localises to the nucleus. Its subcellular location is the cytoplasm. Receptor for retinoic acid. Retinoic acid receptors bind as heterodimers to their target response elements in response to their ligands, all-trans or 9-cis retinoic acid, and regulate gene expression in various biological processes. The RAR/RXR heterodimers bind to the retinoic acid response elements (RARE) composed of tandem 5'-AGGTCA-3' sites known as DR1-DR5. In the absence of ligand, acts mainly as an activator of gene expression due to weak binding to corepressors. Required for limb bud development. In concert with RARA or RARB, required for skeletal growth, matrix homeostasis and growth plate function. The sequence is that of Retinoic acid receptor gamma (Rarg) from Mus musculus (Mouse).